The primary structure comprises 399 residues: Coiled-coil domain-containing protein 85C-B (399 aa).

2 coiled-coil regions span residues 52–84 (NRSL…ELCC) and 113–144 (KEVS…DIIL). A disordered region spans residues 151-199 (NGAGSRSSIDSQSSLSNLNGGSGTVRDVGDGSSTSSGGSAGSPDHHHNH). A compositionally biased stretch (low complexity) spans 155-169 (SRSSIDSQSSLSNLN).

It belongs to the CCDC85 family.

It localises to the cell junction. It is found in the tight junction. The protein localises to the adherens junction. Its function is as follows. May play a role in cell-cell adhesion and epithelium development through its interaction with proteins of the beta-catenin family. May play an important role in cortical development, especially in the maintenance of radial glia. The chain is Coiled-coil domain-containing protein 85C-B (ccdc85cb) from Danio rerio (Zebrafish).